Here is an 889-residue protein sequence, read N- to C-terminus: Alanine--tRNA ligase (889 aa).

Histidine 587, histidine 591, cysteine 691, and histidine 695 together coordinate Zn(2+). 2 disordered regions span residues 734–760 (QQEQ…EENK) and 866–889 (AQGG…MILG). The span at 872–881 (DTSKKDEAIS) shows a compositional bias: basic and acidic residues.

This sequence belongs to the class-II aminoacyl-tRNA synthetase family. The cofactor is Zn(2+).

The protein localises to the cytoplasm. The catalysed reaction is tRNA(Ala) + L-alanine + ATP = L-alanyl-tRNA(Ala) + AMP + diphosphate. Catalyzes the attachment of alanine to tRNA(Ala) in a two-step reaction: alanine is first activated by ATP to form Ala-AMP and then transferred to the acceptor end of tRNA(Ala). Also edits incorrectly charged Ser-tRNA(Ala) and Gly-tRNA(Ala) via its editing domain. In Nitrosopumilus maritimus (strain SCM1), this protein is Alanine--tRNA ligase.